Consider the following 86-residue polypeptide: Chymotrypsin inhibitor (86 aa).

The N-terminal stretch at 1–16 (MKTLCIFLVLVVAVAA) is a signal peptide. 4 cysteine pairs are disulfide-bonded: C26/C58, C38/C50, C42/C82, and C60/C76. The TIL domain maps to 26-82 (CPPNKEFGSYGDCPPSCLKNPPNFCTLKLNYGCKCKEGYVLTRYQDYESDCIKPEEC).

This sequence belongs to the serine protease inhibitor-like (TIL domain-containing) family. As to expression, only expressed in fat body.

The protein resides in the secreted. Functionally, serine protease inhibitor that inhibits chymotrypsin (IC(50)=34.13 nM, Ki=49.85 nM), microbial serine proteases (subtilisin A (IC(50)=21.31 nM, Ki=20.51 nM) and proteinase K (IC(50)=52.56 nM, Ki=65.42 nM)), as well as human neutrophil elastase (IC(50)=11.54 nM, Ki=8.74 nM), and porcine pancreatic elastase (IC(50)=19.07 nM, Ki=11.32 nM). The protein is Chymotrypsin inhibitor of Araneus ventricosus (Orbweaver spider).